Consider the following 309-residue polypeptide: Probable L,D-transpeptidase ErfK/SrfK (309 aa).

The first 21 residues, 1 to 21 (MRRITPFFPFFVLLVSHFSLA), serve as a signal peptide directing secretion. Positions 96–231 (EGIVVNVAEM…VPVGTRVQII (136 aa)) constitute a L,D-TPase catalytic domain. Residue histidine 191 is the Proton donor/acceptor of the active site. The active-site Nucleophile is cysteine 207.

Belongs to the YkuD family.

The protein resides in the periplasm. Its pathway is cell wall biogenesis; peptidoglycan biosynthesis. In Salmonella typhimurium (strain LT2 / SGSC1412 / ATCC 700720), this protein is Probable L,D-transpeptidase ErfK/SrfK (erfK).